The chain runs to 165 residues: SsrA-binding protein (165 aa).

The span at 1–10 (MSKKGKKKSK) shows a compositional bias: basic residues. The tract at residues 1-21 (MSKKGKKKSKNNSSVDGNRRL) is disordered.

This sequence belongs to the SmpB family.

It is found in the cytoplasm. In terms of biological role, required for rescue of stalled ribosomes mediated by trans-translation. Binds to transfer-messenger RNA (tmRNA), required for stable association of tmRNA with ribosomes. tmRNA and SmpB together mimic tRNA shape, replacing the anticodon stem-loop with SmpB. tmRNA is encoded by the ssrA gene; the 2 termini fold to resemble tRNA(Ala) and it encodes a 'tag peptide', a short internal open reading frame. During trans-translation Ala-aminoacylated tmRNA acts like a tRNA, entering the A-site of stalled ribosomes, displacing the stalled mRNA. The ribosome then switches to translate the ORF on the tmRNA; the nascent peptide is terminated with the 'tag peptide' encoded by the tmRNA and targeted for degradation. The ribosome is freed to recommence translation, which seems to be the essential function of trans-translation. This is SsrA-binding protein from Prochlorococcus marinus (strain NATL1A).